A 431-amino-acid chain; its full sequence is Leucine carboxyl methyltransferase 1 (431 aa).

S-adenosyl-L-methionine contacts are provided by residues Arg103, Gly131, Asp159, and 219-220 (DL). Residues 228–268 (QPQQPLPPGVPIGSRGLHASPFTPGSTTQHEEQTEETSLPQ) form a disordered region. Residue Glu289 participates in S-adenosyl-L-methionine binding.

This sequence belongs to the methyltransferase superfamily. LCMT family.

It carries out the reaction [phosphatase 2A protein]-C-terminal L-leucine + S-adenosyl-L-methionine = [phosphatase 2A protein]-C-terminal L-leucine methyl ester + S-adenosyl-L-homocysteine. Its function is as follows. Methylates the carboxyl group of the C-terminal leucine residue of protein phosphatase 2A catalytic subunits to form alpha-leucine ester residues. The protein is Leucine carboxyl methyltransferase 1 (ppm-1) of Neurospora crassa (strain ATCC 24698 / 74-OR23-1A / CBS 708.71 / DSM 1257 / FGSC 987).